Consider the following 1015-residue polypeptide: MSKKPPNRPGITFEIGARLEALDYLQKWYPSRIEKIDYEEGKMLVHFERWSHRYDEWIYWDSNRLRPLERPSLRKEGLKDEEDLFDFKAGEEVLARWTDCRYYPAKIEAINKEGTFTVQFYDGVIRCLKRMHIKAMPEDAKGQVKSQHPLSWCCPIDPAGSCNQSMGSEDWIALVKAAAAAAAKNKTGSKPRTSANSNKEKERDGGKWFKVPSKKAETSTCIVTAEIEKKEELPTSSEPFGLHIDSVPKIVFPQPESTLTNKRKNNQGNSFQAKRARLNKITGLLASKAVGVDGAEKKEDCSATAPVLEQAISPKPQSQKKNEAVISSSANTQKPALLSSTLSSGKARSKKCKHESGESSGCIKAPKSPLAPELIQAKDLTLVSQLSSVINKTSSPQPVNPPRPCKHSERRRRSQRLATLPMPDDSLEKLSSSSSATDGKVFSISSQNQQESSVPEVPAIAYVPLQKLGPCLPLDLSCGSEVTGSQAPDSSYPGGECPREEKEETPLFANPTSKVVSDVKGAAAATGILKTEKKVKLEEKTSTAFGKRKEKDKERKEKRDKDHYKPKQKKKKKKKKKSKQHDYSDYEDSSLDFLERCSSPLTRSSGSSLAPRSTFTEKTTTYQYPRAILSVDLSGENLSDVEFLDDSSTESLLLSGDEYNQDFDSTNFEESQDEDDALNEIVRCICELDEENGFMIQCEECLCWQHSVCMGLLEDSIPEQYICYICRDPPGQRWNAKYRYDKEWLNNGRMYGLSFVKENYSHLNAKKIVSTHHLLADVYGITEVLHGLQLKIGILKNKHHPDLRLWAYSGKRKDQDQVVAGAERKVILQDTANSEGRKYVQNHKEPPLKMEETYITSEHSYQKPQSFSQDCHSLTDPGSSDDDDVSSFEEDGELHVADNSHLLYSVKERGVSEKNPASENKVFVYNDKKGMEGPGDAHLQWQLNLLTHIENVQNEVTSRMDLIEKEVDVLESWLDFTGELEPPDPLARLPQLKRHIKQLLLDMGKVQQIATLCSV.

The Tudor 1 domain occupies Ile11–Pro71. Glycyl lysine isopeptide (Lys-Gly) (interchain with G-Cter in SUMO2) cross-links involve residues Lys75 and Lys79. In terms of domain architecture, Tudor 2 spans Phe85 to Lys141. Disordered regions lie at residues Ala183–Gly206 and Glu309–Lys367. 2 stretches are compositionally biased toward polar residues: residues Lys186–Ser197 and Lys315–Lys346. Ser368 bears the Phosphoserine mark. 2 disordered regions span residues Val389 to Pro455 and Cys478 to Ser513. Positions Pro404 to Gln415 are enriched in basic residues. Ser432 is subject to Phosphoserine. Composition is skewed to polar residues over residues Ser443–Ser453 and Ser480–Asp489. Lys530 is covalently cross-linked (Glycyl lysine isopeptide (Lys-Gly) (interchain with G-Cter in SUMO2)). Residues Glu539 to Lys565 are compositionally biased toward basic and acidic residues. Residues Glu539–Asp585 are disordered. The span at Pro566–Lys579 shows a compositional bias: basic residues. The PHD-type zinc finger occupies Ile681–Pro729. Lys849 participates in a covalent cross-link: Glycyl lysine isopeptide (Lys-Gly) (interchain with G-Cter in SUMO2). A compositionally biased stretch (polar residues) spans His859–Gly878. Residues His859–Glu889 form a disordered region. Residues Ser879–Glu889 show a composition bias toward acidic residues. Position 907 is an N6-acetyllysine (Lys907).

In terms of assembly, interacts with methylated DNMT1 (DNMT1K142me1). Interacts with SOX2.

Its subcellular location is the nucleus. Functionally, is a negative regulator of proteasomal degradation of a set of methylated proteins, including DNMT1 and SOX2. Involved in the maintainance of embryonic stem cells pluripotency, through the regulation of SOX2 levels. This chain is PHD finger protein 20-like protein 1 (Phf20l1), found in Rattus norvegicus (Rat).